The chain runs to 438 residues: Trigger factor (438 aa).

A PPIase FKBP-type domain is found at 163–248 (GDTAIIDFAG…VKEIKRKEIA (86 aa)).

This sequence belongs to the FKBP-type PPIase family. Tig subfamily.

It is found in the cytoplasm. The catalysed reaction is [protein]-peptidylproline (omega=180) = [protein]-peptidylproline (omega=0). Functionally, involved in protein export. Acts as a chaperone by maintaining the newly synthesized protein in an open conformation. Functions as a peptidyl-prolyl cis-trans isomerase. The sequence is that of Trigger factor from Pelotomaculum thermopropionicum (strain DSM 13744 / JCM 10971 / SI).